The chain runs to 137 residues: Universal stress protein in QAH/OAS sulfhydrylase 3'region (137 aa).

This sequence belongs to the universal stress protein A family.

The sequence is that of Universal stress protein in QAH/OAS sulfhydrylase 3'region from Thermus aquaticus.